The following is a 434-amino-acid chain: Ribosomal RNA-processing protein 14 (434 aa).

Serine 2 bears the N-acetylserine mark. Composition is skewed to basic and acidic residues over residues 32–58 (KSQEQWKAKKKTKEQSKNDKLKKLDPE), 70–79 (VMKKKEKDAK), and 95–105 (KQKEATSKVEG). Residues 32 to 257 (KSQEQWKAKK…RFKKGKKDSE (226 aa)) are disordered. A compositionally biased stretch (acidic residues) spans 121–140 (PDEDEEEEEDIKVIFDDEGN). The segment covering 144 to 178 (LESKKDTTEPDRSVEKKSITEEEKLQRKKNLEALR) has biased composition (basic and acidic residues). 2 coiled-coil regions span residues 162-230 (ITEE…EIAS) and 293-360 (AKND…QKRK). Positions 220-241 (EQEQDQDEIASDSDMEDIDSDL) are enriched in acidic residues. A compositionally biased stretch (basic and acidic residues) spans 375-392 (TISERQKRREENLRIRKD). The interval 375 to 434 (TISERQKRREENLRIRKDNKGKKRNKQEKMKRKYVGSAVPKKRAGFEGRLKTGKKKGGPK) is disordered. Basic residues-rich tracts occupy residues 393-408 (NKGKKRNKQEKMKRKY) and 425-434 (KTGKKKGGPK).

It belongs to the SURF6 family. As to quaternary structure, component of the 90S and 60S pre-ribosomal particles.

It is found in the nucleus. The protein resides in the nucleolus. Its function is as follows. Involved in ribosome biogenesis and cell polarity. Required for the synthesis of both 40S and 60S ribosomal subunits and may also play some direct role in correct positioning of the mitotic spindle during mitosis. The chain is Ribosomal RNA-processing protein 14 (RRP14) from Saccharomyces cerevisiae (strain ATCC 204508 / S288c) (Baker's yeast).